The following is a 376-amino-acid chain: Pregnancy-associated glycoprotein 2 (376 aa).

The N-terminal stretch at M1–C15 is a signal peptide. N-linked (GlcNAc...) asparagine glycans are attached at residues N51 and N71. In terms of domain architecture, Peptidase A1 spans Y68–A373. D86 is a catalytic residue. Cysteines 99 and 104 form a disulfide. 3 N-linked (GlcNAc...) asparagine glycosylation sites follow: N114, N248, and N252. C258 and C262 are oxidised to a cystine. The active site involves D267. C300 and C333 are disulfide-bonded. A glycan (N-linked (GlcNAc...) asparagine) is linked at N343.

This sequence belongs to the peptidase A1 family. Post-translationally, N-Glycosylated; the glycans terminate in either N-acetyl-galactosamine (GalNAc) or N-acetyllactosamine. Terminal GalNAc on Asn-linked glycans is greatly reduced prior to parturition while lactosamine-type N-glycans remain unaltered. Trophoblast and placental tissue. Localized to both the mononucleate and binucleate cells of the trophectoderm.

The protein localises to the secreted. The protein resides in the extracellular space. Functionally, PAG2 or a processed derivative of this molecule might represent a factor that binds the LH receptor. This is Pregnancy-associated glycoprotein 2 (PAG2) from Bos taurus (Bovine).